We begin with the raw amino-acid sequence, 422 residues long: Keratin, type I cytoskeletal 23 (422 aa).

The segment covering Met1–Arg24 has biased composition (polar residues). Residues Met1–His35 are disordered. The tract at residues Met1–Asn71 is head. Positions Gly72–Trp107 are coil 1A. The IF rod domain occupies Gly72 to Thr382. The interval His108 to Asn125 is linker 1. Residues Ile126 to Asn217 are coil 1B. A linker 12 region spans residues His218–Val240. Positions Leu241–Asp378 are coil 2. The rod-like helical tail stretch occupies residues Thr379–Ile422.

Belongs to the intermediate filament family. As to quaternary structure, heterotetramer of two type I and two type II keratins.

The chain is Keratin, type I cytoskeletal 23 (Krt23) from Mus musculus (Mouse).